The sequence spans 360 residues: MSGSVLFTAGERWRCFLTPSRSSLYWALHNFCCRKKSTTPKKITPNVTFCDENAKEPENALDKLFSSEQQASILHVLNTASTKELEAFRLLRGRRSINIVEHRENFGPFQNLESLMNVPLFKYKSTVQVCNSILCPKTGREKRKSPENRFLRKLLKPDIERERLKAVNSIISIVFGTRRIAWAHLDRKLTVLDWQQSDRWSLMRGIYSSSVYLEEISSIISKMPKADFYVLEKTGLSIQNSSLFPILLHFHIMEAMLYALLNKTFAQDGQHQVLSMNRNAVGKHFELMIGDSRTSGKELVKQFLFDSILKADPRVFFPSDKIVHYRQMFLSTELQRVEELYDSLLQAIAFYELAVFDSQP.

A mitochondrion-targeting transit peptide spans 1 to 35 (MSGSVLFTAGERWRCFLTPSRSSLYWALHNFCCRK).

It belongs to the TEFM family. Interacts with POLRMT.

It is found in the mitochondrion matrix. Its subcellular location is the mitochondrion nucleoid. Functionally, transcription elongation factor which increases mitochondrial RNA polymerase processivity. Regulates transcription of the mitochondrial genome, including genes important for the oxidative phosphorylation machinery. The polypeptide is Transcription elongation factor, mitochondrial (TEFM) (Homo sapiens (Human)).